Here is a 374-residue protein sequence, read N- to C-terminus: Beta sliding clamp (374 aa).

The protein belongs to the beta sliding clamp family. As to quaternary structure, forms a ring-shaped head-to-tail homodimer around DNA which binds and tethers DNA polymerases and other proteins to the DNA. The DNA replisome complex has a single clamp-loading complex (3 tau and 1 each of delta, delta', psi and chi subunits) which binds 3 Pol III cores (1 core on the leading strand and 2 on the lagging strand) each with a beta sliding clamp dimer. Additional proteins in the replisome are other copies of gamma, psi and chi, Ssb, DNA helicase and RNA primase.

Its subcellular location is the cytoplasm. Its function is as follows. Confers DNA tethering and processivity to DNA polymerases and other proteins. Acts as a clamp, forming a ring around DNA (a reaction catalyzed by the clamp-loading complex) which diffuses in an ATP-independent manner freely and bidirectionally along dsDNA. Initially characterized for its ability to contact the catalytic subunit of DNA polymerase III (Pol III), a complex, multichain enzyme responsible for most of the replicative synthesis in bacteria; Pol III exhibits 3'-5' exonuclease proofreading activity. The beta chain is required for initiation of replication as well as for processivity of DNA replication. The sequence is that of Beta sliding clamp (dnaN) from Helicobacter pylori (strain ATCC 700392 / 26695) (Campylobacter pylori).